The primary structure comprises 599 residues: Nucleolar protein dnt1 (599 aa).

The residue at position 174 (S174) is a Phosphoserine. Disordered stretches follow at residues 210–262 (TQEE…PSRL) and 292–599 (DKSL…AALV). The span at 218 to 241 (QSFNSSLTPSQPTTYNRANFFSIN) shows a compositional bias: polar residues. A compositionally biased stretch (low complexity) spans 242–251 (DASSDSSSDA). Positions 292–303 (DKSLRSSTREVS) are enriched in basic and acidic residues. Residue S306 is modified to Phosphoserine. The segment covering 307-320 (PNEDSVNDDSSSDV) has biased composition (acidic residues). Residues 321 to 333 (SDEKETEAKHEIR) are compositionally biased toward basic and acidic residues. Positions 344–354 (SHPSTAVPSEN) are enriched in polar residues. The segment covering 364–380 (LSESSTTSISSSPSENS) has biased composition (low complexity). A compositionally biased stretch (polar residues) spans 390–401 (DSPNKSLVNDNV). A compositionally biased stretch (basic and acidic residues) spans 402-413 (SAKHDKESENGK). A compositionally biased stretch (polar residues) spans 421–431 (QTLVTTSTISA). Positions 436–452 (PSDEIGSENDSDSDSDS) are enriched in acidic residues. The span at 456–480 (VPLSQLQKKSQQRNSVSHEIQNRGT) shows a compositional bias: polar residues. Over residues 483 to 500 (SPKEPKAKPSTERPETHR) the composition is skewed to basic and acidic residues. Residues 501 to 514 (TLSYSRLSELSKTF) are compositionally biased toward polar residues. T513 is modified (phosphothreonine). 2 stretches are compositionally biased toward basic and acidic residues: residues 533-542 (ESKEEGRSDE) and 558-574 (NSEK…EKRA).

Phosphorylated by clp1.

Its subcellular location is the cytoplasm. It localises to the nucleus. The protein resides in the nucleolus. It is found in the cytoskeleton. The protein localises to the spindle. In terms of biological role, negatively regulates the septation initiation network (SIN) pathway, independently of the cdc14 phosphatase clp1. May also have a role in silencing rDNA transcription. Required for maintaining the exclusive nucleolus localization of nuc1. This Schizosaccharomyces pombe (strain 972 / ATCC 24843) (Fission yeast) protein is Nucleolar protein dnt1 (dnt1).